A 605-amino-acid polypeptide reads, in one-letter code: Tungsten-containing aldehyde ferredoxin oxidoreductase (605 aa).

Tungstopterin-binding residues include R76, N93, G95, R182, A183, G185, and R186. [4Fe-4S] cluster-binding residues include C288, C291, and C295. Residues D338, L342, D343, R444, K450, D489, and L493 each coordinate tungstopterin. A [4Fe-4S] cluster-binding site is contributed by C494. Residue L495 participates in tungstopterin binding.

Belongs to the AOR/FOR family. In terms of assembly, monomer. Homodimer. [4Fe-4S] cluster serves as cofactor. Requires tungstopterin as cofactor.

The enzyme catalyses an aldehyde + 2 oxidized [2Fe-2S]-[ferredoxin] + H2O = a carboxylate + 2 reduced [2Fe-2S]-[ferredoxin] + 3 H(+). With respect to regulation, inhibited by arsenite, iodoacetate and cyanide. Functionally, aldehyde ferredoxin oxidoreductase with a broad substrate specificity. Catalyzes the oxidation of a range of aliphatic aldehydes to their corresponding carboxylic acids. In vitro can use crotonaldehyde, acetaldehyde, formaldehyde, butyraldehyde or glyceraldehyde as substrate, using methyl viologen or ferredoxin, but not NAD(P), as the electron acceptor. Does not oxidize glucose or glyceraldehyde 3-phosphate. May be involved in a pyroglycolytic pathway. In Pyrococcus furiosus (strain ATCC 43587 / DSM 3638 / JCM 8422 / Vc1), this protein is Tungsten-containing aldehyde ferredoxin oxidoreductase.